A 369-amino-acid chain; its full sequence is 2-aminoethylphosphonate--pyruvate transaminase (369 aa).

K193 is modified (N6-(pyridoxal phosphate)lysine).

The protein belongs to the class-V pyridoxal-phosphate-dependent aminotransferase family. PhnW subfamily. In terms of assembly, homodimer. It depends on pyridoxal 5'-phosphate as a cofactor.

It catalyses the reaction (2-aminoethyl)phosphonate + pyruvate = phosphonoacetaldehyde + L-alanine. Functionally, involved in phosphonate degradation. The sequence is that of 2-aminoethylphosphonate--pyruvate transaminase from Burkholderia mallei (strain NCTC 10247).